Reading from the N-terminus, the 927-residue chain is DNA mismatch repair protein MutS (927 aa).

Residue 646 to 653 (GPNMAGKS) coordinates ATP. A disordered region spans residues 904–927 (SAQPGSAEQGESPDKHDEGKNSRG). Residues 915-927 (SPDKHDEGKNSRG) show a composition bias toward basic and acidic residues.

It belongs to the DNA mismatch repair MutS family.

In terms of biological role, this protein is involved in the repair of mismatches in DNA. It is possible that it carries out the mismatch recognition step. This protein has a weak ATPase activity. The protein is DNA mismatch repair protein MutS of Desulfovibrio desulfuricans (strain ATCC 27774 / DSM 6949 / MB).